The following is a 202-amino-acid chain: Transmembrane 4 L6 family member 1 (202 aa).

Topologically, residues 1–9 (MCSSKCTRY) are cytoplasmic. The chain crosses the membrane as a helical span at residues 10–30 (IGHSLVVFAVLCIVANILLYF). Residues 31–49 (PNGETKYAYEDHLSRFVWF) lie on the Extracellular side of the membrane. A helical transmembrane segment spans residues 50–70 (FAGIVGGGLLILLPAFVFLGL). Over 71–93 (EGEDCCGCWSCENYGKRCTMLSS) the chain is Cytoplasmic. A helical membrane pass occupies residues 94 to 114 (IMAALIGIAGSGYCVIVAALG). Residues 115 to 161 (LAEGPKCGDSHGMWNYTFANTDGQYLLDPTTWSKCHEPNNIVEWNVT) are Extracellular-facing. N-linked (GlcNAc...) asparagine glycans are attached at residues Asn129 and Asn159. The chain crosses the membrane as a helical span at residues 162–182 (LFSILLALGGLEFILCLIQVI). The Cytoplasmic segment spans residues 183–202 (NGVLEGMCSYCCSHQQQYDC).

Belongs to the L6 tetraspanin family. As to quaternary structure, present in high molecular weight complexes in tumor cells. Interacts with SDCBP2.

The protein resides in the membrane. The polypeptide is Transmembrane 4 L6 family member 1 (TM4SF1) (Mesocricetus auratus (Golden hamster)).